The following is a 687-amino-acid chain: DNA ligase (687 aa).

NAD(+) is bound by residues 34–38 (DAEYD), 83–84 (SL), and Glu117. Catalysis depends on Lys119, which acts as the N6-AMP-lysine intermediate. 4 residues coordinate NAD(+): Arg140, Glu182, Lys298, and Lys322. Zn(2+)-binding residues include Cys416, Cys419, Cys434, and Cys439. Residues 609-687 (EARGPFAGKT…EEEFVRLLKE (79 aa)) enclose the BRCT domain.

The protein belongs to the NAD-dependent DNA ligase family. LigA subfamily. It depends on Mg(2+) as a cofactor. Requires Mn(2+) as cofactor.

The enzyme catalyses NAD(+) + (deoxyribonucleotide)n-3'-hydroxyl + 5'-phospho-(deoxyribonucleotide)m = (deoxyribonucleotide)n+m + AMP + beta-nicotinamide D-nucleotide.. DNA ligase that catalyzes the formation of phosphodiester linkages between 5'-phosphoryl and 3'-hydroxyl groups in double-stranded DNA using NAD as a coenzyme and as the energy source for the reaction. It is essential for DNA replication and repair of damaged DNA. The sequence is that of DNA ligase from Anaeromyxobacter sp. (strain K).